The sequence spans 585 residues: Switch-associated protein 70 (585 aa).

The PH domain maps to 210-306; the sequence is DVLKQGYMIK…WIQAIHSTIH (97 aa). Positions 316–532 form a coiled coil; the sequence is HKEARQRRKE…KLEMAAKMTK (217 aa).

As to quaternary structure, the SWAP complex consists of NPM1, NCL, PARP1 and SWAP70. In terms of processing, tyrosine-phosphorylated.

It is found in the cytoplasm. The protein resides in the cell membrane. The protein localises to the nucleus. Its subcellular location is the cell projection. It localises to the lamellipodium. Its function is as follows. Phosphatidylinositol 3,4,5-trisphosphate-dependent guanine nucleotide exchange factor (GEF) which, independently of RAS, transduces signals from tyrosine kinase receptors to RAC. It also mediates signaling of membrane ruffling. Regulates the actin cytoskeleton as an effector or adapter protein in response to agonist stimulated phosphatidylinositol (3,4)-bisphosphate production and cell protrusion. This is Switch-associated protein 70 (SWAP70) from Bos taurus (Bovine).